A 202-amino-acid polypeptide reads, in one-letter code: Precorrin-2 dehydrogenase (202 aa).

Residues 20–21 and 41–42 each bind NAD(+); these read TI and PT.

Belongs to the precorrin-2 dehydrogenase / sirohydrochlorin ferrochelatase family. Homodimer.

It catalyses the reaction precorrin-2 + NAD(+) = sirohydrochlorin + NADH + 2 H(+). Its pathway is cofactor biosynthesis; adenosylcobalamin biosynthesis; sirohydrochlorin from precorrin-2: step 1/1. The protein operates within porphyrin-containing compound metabolism; siroheme biosynthesis; sirohydrochlorin from precorrin-2: step 1/1. Functionally, catalyzes the dehydrogenation of precorrin-2 to form sirohydrochlorin which is used as a precursor in both siroheme biosynthesis and in the anaerobic branch of adenosylcobalamin biosynthesis. It is unable to oxidize precorrin-3. In Priestia megaterium (Bacillus megaterium), this protein is Precorrin-2 dehydrogenase (sirC).